A 530-amino-acid polypeptide reads, in one-letter code: uncharacterized protein (530 aa).

The stretch at 485–529 (SKEENREIKLSIRENKEKQRKKSVEKSVSKLQNQLNRLLNKNTIE) forms a coiled coil.

This is an uncharacterized protein from Acanthamoeba polyphaga (Amoeba).